Reading from the N-terminus, the 147-residue chain is MVHFTAEEKAAITSTWKLVDVEDAGAEALGRLLVVYPWTQRFFDSFGNLSSSSAIMGNPKVKAHGKKVLTAFGDAVKNVDDLKNTFAHLSELHCDRLHVDPENFKLLGNVLVIVLAKYFGKEFTPQVQSAWQKLVAGVATALAHKYH.

Residues 3–147 (HFTAEEKAAI…VATALAHKYH (145 aa)) form the Globin domain. Heme b-binding residues include His64 and His93.

The protein belongs to the globin family. In terms of assembly, heterotetramer of two alpha chains and two gamma chains. In terms of tissue distribution, red blood cells.

In terms of biological role, this protein functions as an embryonic globin, but the gene structure and chromosomal location resemble more closely the human gamma chain gene, which codes for a fetal globin. This chain is Hemoglobin subunit gamma (HBG), found in Oryctolagus cuniculus (Rabbit).